A 491-amino-acid polypeptide reads, in one-letter code: Ligand-gated ion channel 50 (491 aa).

A signal peptide spans 1–19; sequence MRFLLVLQLVFFYFSAATT. N-linked (GlcNAc...) asparagine glycans are attached at residues N55 and N101. A disulfide bond links C157 and C171. The next 3 helical transmembrane spans lie at 241 to 261, 265 to 287, and 302 to 322; these read LFQSYFPTSLTVISSWVGFFF, SVSARITLGVSSLLALTFQFGNV, and VWMIFSVIFIFCTLVELAIVC. A glycan (N-linked (GlcNAc...) asparagine) is linked at N418. Residues 465-485 traverse the membrane as a helical segment; it reads MIMFPLSFLIFNVVYWSIYFM.

This sequence belongs to the ligand-gated ion channel (TC 1.A.9) family.

It localises to the postsynaptic cell membrane. The protein localises to the cell membrane. The protein is Ligand-gated ion channel 50 (lgc-50) of Caenorhabditis elegans.